Consider the following 301-residue polypeptide: Homoserine O-acetyltransferase (301 aa).

Catalysis depends on cysteine 142, which acts as the Acyl-thioester intermediate. The substrate site is built by lysine 163 and serine 192. Histidine 235 functions as the Proton acceptor in the catalytic mechanism. Residue glutamate 237 is part of the active site. Arginine 249 lines the substrate pocket.

Belongs to the MetA family.

It is found in the cytoplasm. The enzyme catalyses L-homoserine + acetyl-CoA = O-acetyl-L-homoserine + CoA. Its pathway is amino-acid biosynthesis; L-methionine biosynthesis via de novo pathway; O-acetyl-L-homoserine from L-homoserine: step 1/1. In terms of biological role, transfers an acetyl group from acetyl-CoA to L-homoserine, forming acetyl-L-homoserine. This chain is Homoserine O-acetyltransferase, found in Bacillus cereus (strain AH187).